Here is a 266-residue protein sequence, read N- to C-terminus: Putative hydro-lyase Jann_2570 (266 aa).

Belongs to the D-glutamate cyclase family.

In Jannaschia sp. (strain CCS1), this protein is Putative hydro-lyase Jann_2570.